The primary structure comprises 426 residues: Serine--tRNA ligase (426 aa).

Residue 233–235 (TAE) coordinates L-serine. ATP is bound at residue 264 to 266 (RSE). L-serine is bound at residue Glu287. 351–354 (EISS) contacts ATP. Residue Ser387 participates in L-serine binding.

The protein belongs to the class-II aminoacyl-tRNA synthetase family. Type-1 seryl-tRNA synthetase subfamily. As to quaternary structure, homodimer. The tRNA molecule binds across the dimer.

The protein localises to the cytoplasm. It catalyses the reaction tRNA(Ser) + L-serine + ATP = L-seryl-tRNA(Ser) + AMP + diphosphate + H(+). The enzyme catalyses tRNA(Sec) + L-serine + ATP = L-seryl-tRNA(Sec) + AMP + diphosphate + H(+). It functions in the pathway aminoacyl-tRNA biosynthesis; selenocysteinyl-tRNA(Sec) biosynthesis; L-seryl-tRNA(Sec) from L-serine and tRNA(Sec): step 1/1. Catalyzes the attachment of serine to tRNA(Ser). Is also able to aminoacylate tRNA(Sec) with serine, to form the misacylated tRNA L-seryl-tRNA(Sec), which will be further converted into selenocysteinyl-tRNA(Sec). The sequence is that of Serine--tRNA ligase from Clostridium botulinum (strain 657 / Type Ba4).